The following is a 177-amino-acid chain: Ribulose bisphosphate carboxylase small subunit, chloroplastic 6 (177 aa).

A chloroplast-targeting transit peptide spans 1–56 (MASSMMASTAAVARVGPAQTNMVAPFNGLRSSVAFPATRKANNDLSTLPSNGGRVS).

It belongs to the RuBisCO small chain family. In terms of assembly, heterohexadecamer of 8 large and 8 small subunits.

The protein resides in the plastid. It is found in the chloroplast. In terms of biological role, ruBisCO catalyzes two reactions: the carboxylation of D-ribulose 1,5-bisphosphate, the primary event in carbon dioxide fixation, as well as the oxidative fragmentation of the pentose substrate. Both reactions occur simultaneously and in competition at the same active site. Although the small subunit is not catalytic it is essential for maximal activity. The polypeptide is Ribulose bisphosphate carboxylase small subunit, chloroplastic 6 (Lemna gibba (Swollen duckweed)).